The following is a 567-amino-acid chain: uncharacterized protein (567 aa).

6 consecutive transmembrane segments (helical) span residues 20 to 40 (FTIL…SGVL), 69 to 89 (SLET…SVFI), 95 to 115 (AYLT…VALI), 126 to 146 (ILLN…FMCL), 168 to 188 (IPLV…YLLF), and 528 to 548 (IFGS…LLAI).

It localises to the cell membrane. This is an uncharacterized protein from Escherichia coli (strain K12).